Here is a 130-residue protein sequence, read N- to C-terminus: MSKPRIALIAHDAKKDEIVALAGQYRAVLAQCRLVATGTTGGRIAAAHGLEVERKLSGPLGGDLQIGAELADGRVDVVVFLRDPMTAQPHDPDITALVRACDVHNVPVATNVATARMLLDDLARTMQDVC.

One can recognise an MGS-like domain in the interval 1–130; it reads MSKPRIALIA…DLARTMQDVC (130 aa). Substrate is bound by residues His-11, Lys-15, 37–40, and 57–58; these read TGTT and SG. Residue Asp-63 is the Proton donor/acceptor of the active site. Substrate is bound at residue His-90.

This sequence belongs to the methylglyoxal synthase family.

It catalyses the reaction dihydroxyacetone phosphate = methylglyoxal + phosphate. In terms of biological role, catalyzes the formation of methylglyoxal from dihydroxyacetone phosphate. The chain is Methylglyoxal synthase from Burkholderia multivorans (strain ATCC 17616 / 249).